The sequence spans 65 residues: Large ribosomal subunit protein uL30 (65 aa).

The protein belongs to the universal ribosomal protein uL30 family. Part of the 50S ribosomal subunit.

In Chloroflexus aurantiacus (strain ATCC 29366 / DSM 635 / J-10-fl), this protein is Large ribosomal subunit protein uL30.